We begin with the raw amino-acid sequence, 223 residues long: Small ribosomal subunit protein uS3 (223 aa).

A KH type-2 domain is found at 39 to 115 (IRKYIEKNLA…RVFINIVEIK (77 aa)).

This sequence belongs to the universal ribosomal protein uS3 family. As to quaternary structure, part of the 30S ribosomal subunit. Forms a tight complex with proteins S10 and S14.

Its function is as follows. Binds the lower part of the 30S subunit head. Binds mRNA in the 70S ribosome, positioning it for translation. This is Small ribosomal subunit protein uS3 from Leuconostoc mesenteroides subsp. mesenteroides (strain ATCC 8293 / DSM 20343 / BCRC 11652 / CCM 1803 / JCM 6124 / NCDO 523 / NBRC 100496 / NCIMB 8023 / NCTC 12954 / NRRL B-1118 / 37Y).